The following is a 145-amino-acid chain: D-aminoacyl-tRNA deacylase (145 aa).

A Gly-cisPro motif, important for rejection of L-amino acids motif is present at residues 137–138 (GP).

Belongs to the DTD family. In terms of assembly, homodimer.

It is found in the cytoplasm. The enzyme catalyses glycyl-tRNA(Ala) + H2O = tRNA(Ala) + glycine + H(+). It carries out the reaction a D-aminoacyl-tRNA + H2O = a tRNA + a D-alpha-amino acid + H(+). An aminoacyl-tRNA editing enzyme that deacylates mischarged D-aminoacyl-tRNAs. Also deacylates mischarged glycyl-tRNA(Ala), protecting cells against glycine mischarging by AlaRS. Acts via tRNA-based rather than protein-based catalysis; rejects L-amino acids rather than detecting D-amino acids in the active site. By recycling D-aminoacyl-tRNA to D-amino acids and free tRNA molecules, this enzyme counteracts the toxicity associated with the formation of D-aminoacyl-tRNA entities in vivo and helps enforce protein L-homochirality. This is D-aminoacyl-tRNA deacylase from Salmonella paratyphi C (strain RKS4594).